We begin with the raw amino-acid sequence, 212 residues long: Probable GTP-binding protein EngB (212 aa).

Residues 38-210 form the EngB-type G domain; it reads SLPEIAFVGK…KASLAKCIKF (173 aa). GTP is bound by residues 46-53, 73-77, 91-94, 158-161, and 189-191; these read GKSNVGKS, GRTRQ, DLPG, TKSD, and VSN. Residues Ser-53 and Thr-75 each contribute to the Mg(2+) site.

It belongs to the TRAFAC class TrmE-Era-EngA-EngB-Septin-like GTPase superfamily. EngB GTPase family. Requires Mg(2+) as cofactor.

Necessary for normal cell division and for the maintenance of normal septation. This Rickettsia rickettsii (strain Sheila Smith) protein is Probable GTP-binding protein EngB.